The following is a 120-amino-acid chain: MAEPAKKKPKKLPKKDKGQKDIKRKKKESYTVKIYIFKVLKQVHPDIGISSKAMGIMNSFINDIFEKLASEASRLARYNKKSTITPREIQTAVRLLLPGEVAKHKVSEATKAVTKFTSGA.

The tract at residues 1–26 (MAEPAKKKPKKLPKKDKGQKDIKRKK) is disordered. Ala2 is modified (blocked amino end (Ala)). N6-acetyllysine occurs at positions 7, 10, and 11. A Glycyl lysine isopeptide (Lys-Gly) (interchain with G-Cter in ubiquitin) cross-link involves residue Lys115.

It belongs to the histone H2B family. As to quaternary structure, the nucleosome is a histone octamer containing two molecules each of H2A, H2B, H3 and H4 assembled in one H3-H4 heterotetramer and two H2A-H2B heterodimers. The octamer wraps approximately 147 bp of DNA. In terms of processing, can be acetylated to form H2BK6ac, H2BK33ac and H2BK34ac. Post-translationally, monoubiquitinated to form H2BK143ub1; may give a specific tag for epigenetic transcriptional activation.

The protein localises to the nucleus. Its subcellular location is the chromosome. Functionally, core component of nucleosome. Nucleosomes wrap and compact DNA into chromatin, limiting DNA accessibility to the cellular machineries which require DNA as a template. Histones thereby play a central role in transcription regulation, DNA repair, DNA replication and chromosomal stability. DNA accessibility is regulated via a complex set of post-translational modifications of histones, also called histone code, and nucleosome remodeling. The protein is Histone H2B of Pisum sativum (Garden pea).